We begin with the raw amino-acid sequence, 180 residues long: UPF0397 protein SSA_0592 (180 aa).

5 helical membrane-spanning segments follow: residues 9–29, 45–65, 72–92, 113–133, and 146–166; these read VVAT…NIPT, LFSV…GHAI, GGLW…VGFF, LIQF…DVIV, and IVAI…LLTA.

The protein belongs to the UPF0397 family.

The protein resides in the cell membrane. The sequence is that of UPF0397 protein SSA_0592 from Streptococcus sanguinis (strain SK36).